The sequence spans 119 residues: HTH-type transcriptional regulator SarX (119 aa).

Positions Leu-55 to Glu-78 form a DNA-binding region, H-T-H motif.

The protein belongs to the SarA family.

It is found in the cytoplasm. Involved in the regulation of virulence genes. Acts as a repressor of the agr locus and consequently targets genes regulated by the agr system such as sspA, hla and hlb. Binds directly to the agr promoter region. This Staphylococcus aureus (strain USA300) protein is HTH-type transcriptional regulator SarX (sarX).